Reading from the N-terminus, the 231-residue chain is MKLLTFCSFKGGAGKTTALMGLCAALASDGRRVALFDADENRPLTRWKENALRSNTWDSFCEVYAAEEMSLLEAAYEDAELQGFDYALADTHGGSSELNNTIIASSNLLLIPTMLTPLDIDEALSTYRYVIELLLSENLAIPTAVLRQRVPVGRLTTSQRAMSDMLASLPVVQSPMHERDAFAAMKERGMLHLTLLNMRTDPSMRLLERNLRIAMEELVTISKLVGEALER.

The protein is Protein virC1 (virC1) of Rhizobium rhizogenes (Agrobacterium rhizogenes).